A 385-amino-acid chain; its full sequence is 8-amino-7-oxononanoate synthase (385 aa).

Residue R21 coordinates substrate. 108 to 109 (GF) provides a ligand contact to pyridoxal 5'-phosphate. H133 provides a ligand contact to substrate. S179, H207, and T233 together coordinate pyridoxal 5'-phosphate. The residue at position 236 (K236) is an N6-(pyridoxal phosphate)lysine. Position 352 (T352) interacts with substrate.

This sequence belongs to the class-II pyridoxal-phosphate-dependent aminotransferase family. BioF subfamily. Homodimer. Pyridoxal 5'-phosphate is required as a cofactor.

It carries out the reaction 6-carboxyhexanoyl-[ACP] + L-alanine + H(+) = (8S)-8-amino-7-oxononanoate + holo-[ACP] + CO2. Its pathway is cofactor biosynthesis; biotin biosynthesis. In terms of biological role, catalyzes the decarboxylative condensation of pimeloyl-[acyl-carrier protein] and L-alanine to produce 8-amino-7-oxononanoate (AON), [acyl-carrier protein], and carbon dioxide. The sequence is that of 8-amino-7-oxononanoate synthase from Salmonella typhimurium (strain LT2 / SGSC1412 / ATCC 700720).